Here is a 456-residue protein sequence, read N- to C-terminus: Cysteine--tRNA ligase (456 aa).

Cys-29 contributes to the Zn(2+) binding site. The 'HIGH' region signature appears at 31–41 (PTVYDYAHVGN). 3 residues coordinate Zn(2+): Cys-209, His-234, and Glu-238. The 'KMSKS' region motif lies at 267–271 (KMSKS). Residue Lys-270 participates in ATP binding.

This sequence belongs to the class-I aminoacyl-tRNA synthetase family. In terms of assembly, monomer. The cofactor is Zn(2+).

It is found in the cytoplasm. It catalyses the reaction tRNA(Cys) + L-cysteine + ATP = L-cysteinyl-tRNA(Cys) + AMP + diphosphate. In Rhodospirillum centenum (strain ATCC 51521 / SW), this protein is Cysteine--tRNA ligase.